The sequence spans 117 residues: Large ribosomal subunit protein bL20c (117 aa).

It belongs to the bacterial ribosomal protein bL20 family.

Its subcellular location is the plastid. It is found in the chloroplast. In terms of biological role, binds directly to 23S ribosomal RNA and is necessary for the in vitro assembly process of the 50S ribosomal subunit. It is not involved in the protein synthesizing functions of that subunit. The polypeptide is Large ribosomal subunit protein bL20c (Citrus sinensis (Sweet orange)).